The following is a 194-amino-acid chain: Threonylcarbamoyl-AMP synthase (194 aa).

The YrdC-like domain maps to Ser-12–Glu-194.

This sequence belongs to the SUA5 family. TsaC subfamily.

It localises to the cytoplasm. The enzyme catalyses L-threonine + hydrogencarbonate + ATP = L-threonylcarbamoyladenylate + diphosphate + H2O. Its function is as follows. Required for the formation of a threonylcarbamoyl group on adenosine at position 37 (t(6)A37) in tRNAs that read codons beginning with adenine. Catalyzes the conversion of L-threonine, HCO(3)(-)/CO(2) and ATP to give threonylcarbamoyl-AMP (TC-AMP) as the acyladenylate intermediate, with the release of diphosphate. The protein is Threonylcarbamoyl-AMP synthase of Blochmanniella pennsylvanica (strain BPEN).